The following is a 240-amino-acid chain: NDR1/HIN1-like protein 2 (240 aa).

A helical transmembrane segment spans residues 57 to 77 (NILIAVAVILGVAALILWLIF). 4 N-linked (GlcNAc...) asparagine glycosylation sites follow: Asn109, Asn141, Asn151, and Asn223.

Expressed at low levels in roots, rosette leaves, cauline leaves, stems, flowers and siliques.

It localises to the cell membrane. May play a role in plant immunity. This is NDR1/HIN1-like protein 2 from Arabidopsis thaliana (Mouse-ear cress).